Here is a 348-residue protein sequence, read N- to C-terminus: Nicotinate-nucleotide--dimethylbenzimidazole phosphoribosyltransferase (348 aa).

The Proton acceptor role is filled by Glu316.

The protein belongs to the CobT family.

The enzyme catalyses 5,6-dimethylbenzimidazole + nicotinate beta-D-ribonucleotide = alpha-ribazole 5'-phosphate + nicotinate + H(+). Its pathway is nucleoside biosynthesis; alpha-ribazole biosynthesis; alpha-ribazole from 5,6-dimethylbenzimidazole: step 1/2. Its function is as follows. Catalyzes the synthesis of alpha-ribazole-5'-phosphate from nicotinate mononucleotide (NAMN) and 5,6-dimethylbenzimidazole (DMB). This is Nicotinate-nucleotide--dimethylbenzimidazole phosphoribosyltransferase from Xanthomonas oryzae pv. oryzae (strain PXO99A).